Reading from the N-terminus, the 250-residue chain is Ribonuclease PH (250 aa).

Residues Arg86 and 124 to 126 contribute to the phosphate site; that span reads GTR.

This sequence belongs to the RNase PH family. Homohexameric ring arranged as a trimer of dimers.

The enzyme catalyses tRNA(n+1) + phosphate = tRNA(n) + a ribonucleoside 5'-diphosphate. Functionally, phosphorolytic 3'-5' exoribonuclease that plays an important role in tRNA 3'-end maturation. Removes nucleotide residues following the 3'-CCA terminus of tRNAs; can also add nucleotides to the ends of RNA molecules by using nucleoside diphosphates as substrates, but this may not be physiologically important. Probably plays a role in initiation of 16S rRNA degradation (leading to ribosome degradation) during starvation. The chain is Ribonuclease PH from Shouchella clausii (strain KSM-K16) (Alkalihalobacillus clausii).